A 401-amino-acid polypeptide reads, in one-letter code: Elongation factor Tu 1 (401 aa).

One can recognise a tr-type G domain in the interval 10–209 (KPHVNVGTIG…AVDEYIPTPV (200 aa)). Positions 19–26 (GHVDHGKT) are G1. A GTP-binding site is contributed by 19–26 (GHVDHGKT). Position 26 (Thr-26) interacts with Mg(2+). Positions 60 to 64 (GITIA) are G2. Residues 81 to 84 (DCPG) are G3. Residues 81–85 (DCPGH) and 136–139 (NKVD) contribute to the GTP site. Positions 136–139 (NKVD) are G4. Positions 174–176 (SAL) are G5.

This sequence belongs to the TRAFAC class translation factor GTPase superfamily. Classic translation factor GTPase family. EF-Tu/EF-1A subfamily. Monomer.

It localises to the cytoplasm. It carries out the reaction GTP + H2O = GDP + phosphate + H(+). Functionally, GTP hydrolase that promotes the GTP-dependent binding of aminoacyl-tRNA to the A-site of ribosomes during protein biosynthesis. The chain is Elongation factor Tu 1 from Roseiflexus castenholzii (strain DSM 13941 / HLO8).